Reading from the N-terminus, the 580-residue chain is Arginine--tRNA ligase (580 aa).

The 'HIGH' region signature appears at 123–133; the sequence is PNLAKEMHVGH.

This sequence belongs to the class-I aminoacyl-tRNA synthetase family. Monomer.

Its subcellular location is the cytoplasm. The enzyme catalyses tRNA(Arg) + L-arginine + ATP = L-arginyl-tRNA(Arg) + AMP + diphosphate. The sequence is that of Arginine--tRNA ligase from Pseudoalteromonas translucida (strain TAC 125).